The primary structure comprises 339 residues: MNRANDTSSNLKLISLVVLIVQTTALVLTLRYSQTQKSEGPRYLSSTAVVCAEIIKLITCFFVIYRNNGYRFSGMLNELNREIFASPQTRADSLKVAVPAIMYVIQNNLLFFALKKLDAATYQVTYQLKILTTAIFSVTMLGKSLHRYNWMALILLTAGVALVQYPSGDSTTSKSTAAEHDASDNILGLGAVLAACFSSGFAGVYFEKILKTSKVSLWIRNIQLAFFSVFGALLVCWLYDWQAISDDGFLRGYNGVIWIVVLLQAYGGLVIALVVKYADNILKGFAVSLSIILSSFTSWLVLGDLTITTTFAIGATVVIFATFLYGHEPKSTPAEAHNA.

Helical transmembrane passes span 44-64 (LSST…FFVI), 94-114 (LKVA…FFAL), 148-168 (YNWM…YPSG), 186-206 (ILGL…GVYF), 224-244 (LAFF…WQAI), 255-275 (GVIW…ALVV), 281-301 (ILKG…SWLV), and 305-325 (LTIT…TFLY).

The protein belongs to the nucleotide-sugar transporter family. SLC35A subfamily. As to expression, widely expressed, including in pharynx and pharyngeal gland cells, seam cells, spermatheca, stomatointestinal muscle, vulva, and body wall muscle.

It is found in the golgi apparatus membrane. Its function is as follows. Uridine diphosphate-N-acetylglucosamine (UDP-GlcNAc) transporter in the Golgi apparatus. UDP-N-acetylgalactosamine (UDP-GalNAc) transporter in the Golgi apparatus. Apparently transports UDP-GlcNAc and UDP-GalNAc simultaneously, and independently, by an unknown mechanism. Functions redundantly with nucleotide sugar transporter srf-3. May be involved in gonadal development. The chain is UDP-N-acetylglucosamine/UDP-N-acetylgalactosamine transporter nstp-4 from Caenorhabditis elegans.